The following is a 762-amino-acid chain: 5-methyltetrahydropteroyltriglutamate--homocysteine methyltransferase (762 aa).

5-methyltetrahydropteroyltri-L-glutamate-binding positions include Arg17 to Lys20 and Lys111. L-homocysteine contacts are provided by residues Ile435–Ser437 and Glu488. Residues Ile435–Ser437 and Glu488 contribute to the L-methionine site. 5-methyltetrahydropteroyltri-L-glutamate-binding positions include Arg519–Cys520 and Trp565. Position 603 (Asp603) interacts with L-homocysteine. An L-methionine-binding site is contributed by Asp603. Glu609 serves as a coordination point for 5-methyltetrahydropteroyltri-L-glutamate. His645, Cys647, and Glu669 together coordinate Zn(2+). His698 acts as the Proton donor in catalysis. Residue Cys730 participates in Zn(2+) binding.

This sequence belongs to the vitamin-B12 independent methionine synthase family. Requires Zn(2+) as cofactor.

The enzyme catalyses 5-methyltetrahydropteroyltri-L-glutamate + L-homocysteine = tetrahydropteroyltri-L-glutamate + L-methionine. The protein operates within amino-acid biosynthesis; L-methionine biosynthesis via de novo pathway; L-methionine from L-homocysteine (MetE route): step 1/1. Catalyzes the transfer of a methyl group from 5-methyltetrahydrofolate to homocysteine resulting in methionine formation. This Bacillus cereus (strain AH820) protein is 5-methyltetrahydropteroyltriglutamate--homocysteine methyltransferase.